A 1396-amino-acid chain; its full sequence is Sterol 3-beta-glucosyltransferase (1396 aa).

Positions 1–16 (MRPFIDDAKRRAERRL) are enriched in basic and acidic residues. 4 disordered regions span residues 1 to 21 (MRPF…ASRQ), 40 to 64 (DADD…MQYM), 83 to 196 (ARFD…RAAP), and 209 to 232 (ETEN…KKSQ). Basic and acidic residues predominate over residues 94 to 107 (ETRTRPRFLSEKPF). Low complexity predominate over residues 186–196 (RPRSATPRAAP). The region spanning 238–273 (RQLMEMFRFPTPEKVVVEYACSLLQSMLLQGYMYVT) is the GRAM 1 domain. The 100-residue stretch at 289–388 (RVIKSGYIYK…WVRALQKVIF (100 aa)) folds into the PH domain. 2 disordered regions span residues 460–532 (GTPT…SSSS) and 571–627 (TIHT…ESKD). Composition is skewed to polar residues over residues 484-532 (GSQN…SSSS) and 571-584 (TIHT…GTAR). Over residues 588–602 (RHSDEITRSTTEHGL) the composition is skewed to basic and acidic residues. A GRAM 2 domain is found at 717–783 (ERFRAHFALP…HDIENVEKEK (67 aa)). 10 residues coordinate UDP-alpha-D-glucose: serine 905, arginine 906, aspartate 908, alanine 1208, histidine 1210, histidine 1223, glycine 1227, threonine 1228, aspartate 1247, and glutamine 1248. The span at 1324–1343 (SSISSTPFSPTPSTKTSDDQ) shows a compositional bias: low complexity. A disordered region spans residues 1324 to 1346 (SSISSTPFSPTPSTKTSDDQNAN).

It belongs to the glycosyltransferase 28 family.

The protein localises to the cytoplasm. It localises to the preautophagosomal structure membrane. It carries out the reaction a sterol + UDP-alpha-D-glucose = a sterol 3-beta-D-glucoside + UDP + H(+). It catalyses the reaction ergosterol + UDP-alpha-D-glucose = ergosteryl 3-beta-D-glucoside + UDP + H(+). In terms of biological role, sterol glycosyltransferase responsible for the glycosylation of ergosterol to form ergosterol-glucoside. In Emericella nidulans (strain FGSC A4 / ATCC 38163 / CBS 112.46 / NRRL 194 / M139) (Aspergillus nidulans), this protein is Sterol 3-beta-glucosyltransferase.